We begin with the raw amino-acid sequence, 419 residues long: Carboxypeptidase A1 (419 aa).

Residues 1 to 16 (MKRLLVLSVLLAAVFG) form the signal peptide. The propeptide at 17–110 (NENFVGHQVL…KQQMSAFQAR (94 aa)) is activation peptide. The Peptidase M14 domain maps to 121–414 (TYHTLDEIYE…LALLTIMDHT (294 aa)). Residues His-179 and Glu-182 each contribute to the Zn(2+) site. Substrate is bound by residues 179–182 (HSRE), Arg-237, and 254–255 (NR). Residues Cys-248 and Cys-271 are joined by a disulfide bond. His-306 provides a ligand contact to Zn(2+). Residues 307–308 (SY) and Tyr-358 contribute to the substrate site. Glu-380 (proton donor/acceptor) is an active-site residue.

Belongs to the peptidase M14 family. In terms of assembly, monomer. The cofactor is Zn(2+).

Its subcellular location is the secreted. The catalysed reaction is Release of a C-terminal amino acid, but little or no action with -Asp, -Glu, -Arg, -Lys or -Pro.. Functionally, carboxypeptidase that catalyzes the release of a C-terminal amino acid, but has little or no action with -Asp, -Glu, -Arg, -Lys or -Pro. This Mus musculus (Mouse) protein is Carboxypeptidase A1 (Cpa1).